Reading from the N-terminus, the 181-residue chain is Ribose 1,5-bisphosphate phosphokinase PhnN (181 aa).

12 to 19 (GPSGAGKD) contributes to the ATP binding site.

It belongs to the ribose 1,5-bisphosphokinase family.

The catalysed reaction is alpha-D-ribose 1,5-bisphosphate + ATP = 5-phospho-alpha-D-ribose 1-diphosphate + ADP. Its pathway is metabolic intermediate biosynthesis; 5-phospho-alpha-D-ribose 1-diphosphate biosynthesis; 5-phospho-alpha-D-ribose 1-diphosphate from D-ribose 5-phosphate (route II): step 3/3. Functionally, catalyzes the phosphorylation of ribose 1,5-bisphosphate to 5-phospho-D-ribosyl alpha-1-diphosphate (PRPP). This is Ribose 1,5-bisphosphate phosphokinase PhnN from Acidiphilium cryptum (strain JF-5).